The primary structure comprises 795 residues: Phenylalanine--tRNA ligase beta subunit (795 aa).

Positions 39–148 (AGEFTGVKVG…EGTTLGADVR (110 aa)) constitute a tRNA-binding domain. In terms of domain architecture, B5 spans 401–476 (PKANTVELRR…RIYGYNNIPN (76 aa)). Mg(2+) is bound by residues D454, D460, E463, and E464. In terms of domain architecture, FDX-ACB spans 701-794 (SKFPANRRDI…IGEKFSATLR (94 aa)).

It belongs to the phenylalanyl-tRNA synthetase beta subunit family. Type 1 subfamily. In terms of assembly, tetramer of two alpha and two beta subunits. The cofactor is Mg(2+).

The protein localises to the cytoplasm. It catalyses the reaction tRNA(Phe) + L-phenylalanine + ATP = L-phenylalanyl-tRNA(Phe) + AMP + diphosphate + H(+). The chain is Phenylalanine--tRNA ligase beta subunit from Aliivibrio fischeri (strain ATCC 700601 / ES114) (Vibrio fischeri).